The chain runs to 466 residues: Ras-GEF domain-containing family member 1C (466 aa).

Disordered stretches follow at residues 1–35 (MPRTLTASDMVTPGSLSPPPTESTEGEQAGQPLLD) and 443–466 (SESPESQTEKERWKSLRSSILGKT). The region spanning 34 to 164 (LDGAPSSASL…LLQTLHQKLA (131 aa)) is the N-terminal Ras-GEF domain. The 247-residue stretch at 200–446 (DPYTLAQQLT…YLASYESESP (247 aa)) folds into the Ras-GEF domain.

Functionally, guanine nucleotide exchange factor (GEF). The protein is Ras-GEF domain-containing family member 1C (Rasgef1c) of Mus musculus (Mouse).